A 706-amino-acid polypeptide reads, in one-letter code: Ribosomal RNA large subunit methyltransferase K/L (706 aa).

The 112-residue stretch at 43-154 (LMYQSLLWSR…RDMASVALDL (112 aa)) folds into the THUMP domain.

Belongs to the methyltransferase superfamily. RlmKL family.

It is found in the cytoplasm. The catalysed reaction is guanosine(2445) in 23S rRNA + S-adenosyl-L-methionine = N(2)-methylguanosine(2445) in 23S rRNA + S-adenosyl-L-homocysteine + H(+). The enzyme catalyses guanosine(2069) in 23S rRNA + S-adenosyl-L-methionine = N(2)-methylguanosine(2069) in 23S rRNA + S-adenosyl-L-homocysteine + H(+). Specifically methylates the guanine in position 2445 (m2G2445) and the guanine in position 2069 (m7G2069) of 23S rRNA. This Yersinia enterocolitica serotype O:8 / biotype 1B (strain NCTC 13174 / 8081) protein is Ribosomal RNA large subunit methyltransferase K/L.